The chain runs to 570 residues: Sulfite reductase [NADPH] hemoprotein beta-component (570 aa).

Cysteine 434, cysteine 440, cysteine 479, and cysteine 483 together coordinate [4Fe-4S] cluster. Residue cysteine 483 participates in siroheme binding.

Belongs to the nitrite and sulfite reductase 4Fe-4S domain family. Alpha(8)-beta(8). The alpha component is a flavoprotein, the beta component is a hemoprotein. Siroheme is required as a cofactor. It depends on [4Fe-4S] cluster as a cofactor.

It carries out the reaction hydrogen sulfide + 3 NADP(+) + 3 H2O = sulfite + 3 NADPH + 4 H(+). It participates in sulfur metabolism; hydrogen sulfide biosynthesis; hydrogen sulfide from sulfite (NADPH route): step 1/1. Component of the sulfite reductase complex that catalyzes the 6-electron reduction of sulfite to sulfide. This is one of several activities required for the biosynthesis of L-cysteine from sulfate. The chain is Sulfite reductase [NADPH] hemoprotein beta-component from Salmonella typhi.